Reading from the N-terminus, the 179-residue chain is Large ribosomal subunit protein uL5 (179 aa).

It belongs to the universal ribosomal protein uL5 family. As to quaternary structure, part of the 50S ribosomal subunit; part of the 5S rRNA/L5/L18/L25 subcomplex. Contacts the 5S rRNA and the P site tRNA. Forms a bridge to the 30S subunit in the 70S ribosome.

Its function is as follows. This is one of the proteins that bind and probably mediate the attachment of the 5S RNA into the large ribosomal subunit, where it forms part of the central protuberance. In the 70S ribosome it contacts protein S13 of the 30S subunit (bridge B1b), connecting the 2 subunits; this bridge is implicated in subunit movement. Contacts the P site tRNA; the 5S rRNA and some of its associated proteins might help stabilize positioning of ribosome-bound tRNAs. This Rhodospirillum rubrum (strain ATCC 11170 / ATH 1.1.1 / DSM 467 / LMG 4362 / NCIMB 8255 / S1) protein is Large ribosomal subunit protein uL5.